A 452-amino-acid chain; its full sequence is Tripartite motif-containing protein 49C (452 aa).

An RING-type zinc finger spans residues 15 to 56; the sequence is CPLCMNYFIDPVTIDCGHSFCRPCFYLNWQDIPFLVQCSECT. The B box-type zinc-finger motif lies at 88–129; it reads SEEQMCGTHRETKKIFCEVDRSLLCLLCSSSQEHRYHRHRPI. Zn(2+)-binding residues include C93, H96, C115, and H121. One can recognise a B30.2/SPRY domain in the interval 269-452; the sequence is ELSAGPITGL…LRPIFCCIHF (184 aa).

The chain is Tripartite motif-containing protein 49C (TRIM49C) from Homo sapiens (Human).